A 218-amino-acid polypeptide reads, in one-letter code: ATP phosphoribosyltransferase (218 aa).

Belongs to the ATP phosphoribosyltransferase family. Short subfamily. Heteromultimer composed of HisG and HisZ subunits.

The protein resides in the cytoplasm. The catalysed reaction is 1-(5-phospho-beta-D-ribosyl)-ATP + diphosphate = 5-phospho-alpha-D-ribose 1-diphosphate + ATP. Its pathway is amino-acid biosynthesis; L-histidine biosynthesis; L-histidine from 5-phospho-alpha-D-ribose 1-diphosphate: step 1/9. Its function is as follows. Catalyzes the condensation of ATP and 5-phosphoribose 1-diphosphate to form N'-(5'-phosphoribosyl)-ATP (PR-ATP). Has a crucial role in the pathway because the rate of histidine biosynthesis seems to be controlled primarily by regulation of HisG enzymatic activity. In Burkholderia thailandensis (strain ATCC 700388 / DSM 13276 / CCUG 48851 / CIP 106301 / E264), this protein is ATP phosphoribosyltransferase.